A 128-amino-acid chain; its full sequence is 3-aminoacrylate deaminase RutC (128 aa).

Belongs to the RutC family. As to quaternary structure, homotrimer.

It carries out the reaction (Z)-3-aminoacrylate + H2O + H(+) = 3-oxopropanoate + NH4(+). In terms of biological role, involved in pyrimidine catabolism. Catalyzes the deamination of 3-aminoacrylate to malonic semialdehyde, a reaction that can also occur spontaneously. RutC may facilitate the reaction and modulate the metabolic fitness, rather than catalyzing essential functions. The protein is 3-aminoacrylate deaminase RutC of Escherichia coli O111:H- (strain 11128 / EHEC).